We begin with the raw amino-acid sequence, 466 residues long: Ribulose bisphosphate carboxylase large chain (466 aa).

Lys5 bears the N6,N6,N6-trimethyllysine mark. Residues Asn114 and Thr164 each contribute to the substrate site. Lys166 (proton acceptor) is an active-site residue. Lys168 lines the substrate pocket. Positions 192, 194, and 195 each coordinate Mg(2+). Lys192 carries the post-translational modification N6-carboxylysine. The Proton acceptor role is filled by His285. 3 residues coordinate substrate: Arg286, His318, and Ser370.

This sequence belongs to the RuBisCO large chain family. Type I subfamily. As to quaternary structure, heterohexadecamer of 8 large chains and 8 small chains; disulfide-linked. The disulfide link is formed within the large subunit homodimers. It depends on Mg(2+) as a cofactor. Post-translationally, the disulfide bond which can form in the large chain dimeric partners within the hexadecamer appears to be associated with oxidative stress and protein turnover.

It is found in the plastid. The protein resides in the chloroplast. It carries out the reaction 2 (2R)-3-phosphoglycerate + 2 H(+) = D-ribulose 1,5-bisphosphate + CO2 + H2O. The catalysed reaction is D-ribulose 1,5-bisphosphate + O2 = 2-phosphoglycolate + (2R)-3-phosphoglycerate + 2 H(+). Its function is as follows. RuBisCO catalyzes two reactions: the carboxylation of D-ribulose 1,5-bisphosphate, the primary event in carbon dioxide fixation, as well as the oxidative fragmentation of the pentose substrate in the photorespiration process. Both reactions occur simultaneously and in competition at the same active site. In Adenium obesum (Desert rose), this protein is Ribulose bisphosphate carboxylase large chain.